Here is an 82-residue protein sequence, read N- to C-terminus: Penaeidin-3b (82 aa).

The N-terminal stretch at 1–19 is a signal peptide; the sequence is MRLVVCLVFLASFALVCQG. The residue at position 20 (glutamine 20) is a Pyrrolidone carboxylic acid. Disulfide bonds link cysteine 51–cysteine 66, cysteine 55–cysteine 73, and cysteine 67–cysteine 74. Serine 81 is modified (serine amide).

The protein belongs to the penaeidin family. As to expression, higher expression in hemocytes and to a lesser extent in heart, testis, gills, intestine, lymphoid organ and hepatopancreas. Traces in eyes and subcuticular epithelium. Not present in the brain.

Its subcellular location is the cytoplasmic granule. Its function is as follows. Antibacterial activity against M.luteus and E.coli bacteria. Antifungal activity against N.crassa and F.oxysporum. Presents chitin-binding activity. This is Penaeidin-3b from Penaeus vannamei (Whiteleg shrimp).